A 173-amino-acid chain; its full sequence is Cytochrome c-type biogenesis protein CcmE (173 aa).

Topologically, residues 1 to 8 (MNPRRKSR) are cytoplasmic. Residues 9–29 (FKLVIFVVLGIAIASGLMLYA) form a helical; Signal-anchor for type II membrane protein membrane-spanning segment. Residues 30-173 (LRQNIDLFYT…RDRQEKEGAK (144 aa)) are Periplasmic-facing. Heme-binding residues include His131 and Tyr135. Residues 139 to 173 (ELGEKMQKVHKPMGIKAADLKGESERDRQEKEGAK) are disordered. Residues 156 to 173 (ADLKGESERDRQEKEGAK) show a composition bias toward basic and acidic residues.

The protein belongs to the CcmE/CycJ family.

The protein localises to the cell inner membrane. Functionally, heme chaperone required for the biogenesis of c-type cytochromes. Transiently binds heme delivered by CcmC and transfers the heme to apo-cytochromes in a process facilitated by CcmF and CcmH. The sequence is that of Cytochrome c-type biogenesis protein CcmE from Haemophilus influenzae (strain 86-028NP).